A 429-amino-acid chain; its full sequence is Septin-8 (429 aa).

A compositionally biased stretch (basic and acidic residues) spans 1 to 16 (MAATDLERVSNAEPEP). Residues 1-23 (MAATDLERVSNAEPEPRSLSLGG) are disordered. An N-acetylalanine modification is found at Ala2. Ser10 is modified (phosphoserine). The region spanning 41–307 (QGFSFNILCV…ELYRRCKLEE (267 aa)) is the Septin-type G domain. The tract at residues 51–58 (GETGIGKS) is G1 motif. GTP contacts are provided by residues 51 to 58 (GETGIGKS), Gly106, 187 to 195 (KADTISKSE), Gly241, and Arg256. The G3 motif stretch occupies residues 103–106 (DAVG). Residues 186 to 189 (AKAD) are G4 motif. Residues 320-412 (FSLQETYEAK…AAMEALQSQA (93 aa)) are a coiled coil. Over residues 409-420 (QSQALHATSQQP) the composition is skewed to polar residues. The interval 409–429 (QSQALHATSQQPLRKDKDKKN) is disordered.

This sequence belongs to the TRAFAC class TrmE-Era-EngA-EngB-Septin-like GTPase superfamily. Septin GTPase family. Septins polymerize into heterooligomeric protein complexes that form filaments, and can associate with cellular membranes, actin filaments and microtubules. GTPase activity is required for filament formation. Interacts with SEPTIN5. Interacts with CDK14, SEPTIN4 and SEPTIN7. Interacts with VAMP2; the interaction inhibits interaction of VAMP2 with SYP. Interacts with STX1A.

The protein localises to the cytoplasm. The protein resides in the cytoskeleton. Its subcellular location is the synapse. It localises to the cell projection. It is found in the axon. The protein localises to the cytoplasmic vesicle. The protein resides in the secretory vesicle. Its subcellular location is the synaptic vesicle membrane. It localises to the presynapse. Filament-forming cytoskeletal GTPase. May play a role in platelet secretion. Seems to participate in the process of SNARE complex formation in synaptic vesicles. This is Septin-8 from Mus musculus (Mouse).